A 225-amino-acid chain; its full sequence is Ribonuclease 3 (225 aa).

One can recognise an RNase III domain in the interval 2–128; that stretch reads LSTLIKKLKI…LFGAIYLDLG (127 aa). Glutamate 43 serves as a coordination point for Mg(2+). Residue aspartate 47 is part of the active site. Mg(2+) contacts are provided by asparagine 114 and glutamate 117. Glutamate 117 is an active-site residue. Residues 152–220 enclose the DRBM domain; that stretch reads DFKTQLQELV…ARYVLNILSK (69 aa).

This sequence belongs to the ribonuclease III family. Homodimer. Mg(2+) serves as cofactor.

It is found in the cytoplasm. The enzyme catalyses Endonucleolytic cleavage to 5'-phosphomonoester.. Digests double-stranded RNA. Involved in the processing of primary rRNA transcript to yield the immediate precursors to the large and small rRNAs (23S and 16S). Processes some mRNAs, and tRNAs when they are encoded in the rRNA operon. Processes pre-crRNA and tracrRNA of type II CRISPR loci if present in the organism. The sequence is that of Ribonuclease 3 from Phytoplasma mali (strain AT).